Here is a 67-residue protein sequence, read N- to C-terminus: ATP synthase F(0) complex subunit 8 (67 aa).

Residues 8–24 (PWFITILSMIITLFILF) traverse the membrane as a helical segment. K54 bears the N6-acetyllysine; alternate mark. Position 54 is an N6-succinyllysine; alternate (K54). K57 carries the post-translational modification N6-acetyllysine.

Belongs to the ATPase protein 8 family. In terms of assembly, component of the ATP synthase complex composed at least of ATP5F1A/subunit alpha, ATP5F1B/subunit beta, ATP5MC1/subunit c (homooctomer), MT-ATP6/subunit a, MT-ATP8/subunit 8, ATP5ME/subunit e, ATP5MF/subunit f, ATP5MG/subunit g, ATP5MK/subunit k, ATP5MJ/subunit j, ATP5F1C/subunit gamma, ATP5F1D/subunit delta, ATP5F1E/subunit epsilon, ATP5PF/subunit F6, ATP5PB/subunit b, ATP5PD/subunit d, ATP5PO/subunit OSCP. ATP synthase complex consists of a soluble F(1) head domain (subunits alpha(3) and beta(3)) - the catalytic core - and a membrane F(0) domain - the membrane proton channel (subunits c, a, 8, e, f, g, k and j). These two domains are linked by a central stalk (subunits gamma, delta, and epsilon) rotating inside the F1 region and a stationary peripheral stalk (subunits F6, b, d, and OSCP). Interacts with PRICKLE3.

It localises to the mitochondrion membrane. Functionally, subunit 8, of the mitochondrial membrane ATP synthase complex (F(1)F(0) ATP synthase or Complex V) that produces ATP from ADP in the presence of a proton gradient across the membrane which is generated by electron transport complexes of the respiratory chain. ATP synthase complex consist of a soluble F(1) head domain - the catalytic core - and a membrane F(1) domain - the membrane proton channel. These two domains are linked by a central stalk rotating inside the F(1) region and a stationary peripheral stalk. During catalysis, ATP synthesis in the catalytic domain of F(1) is coupled via a rotary mechanism of the central stalk subunits to proton translocation. In vivo, can only synthesize ATP although its ATP hydrolase activity can be activated artificially in vitro. Part of the complex F(0) domain. The polypeptide is ATP synthase F(0) complex subunit 8 (Orycteropus afer (Aardvark)).